The sequence spans 531 residues: Large neutral amino acids transporter small subunit 2 (531 aa).

The segment at 1–29 (MEKGARQRNNTAKNHPGSDTSPEAEASSG) is disordered. The Cytoplasmic segment spans residues 1–43 (MEKGARQRNNTAKNHPGSDTSPEAEASSGGGGVALKKEIGLVS). The span at 7 to 21 (QRNNTAKNHPGSDTS) shows a compositional bias: polar residues. Ser18, Ser21, Ser27, and Ser28 each carry phosphoserine. A helical membrane pass occupies residues 44 to 64 (ACGIIVGNIIGSGIFVSPKGV). Ile52 serves as a coordination point for L-leucine. The Extracellular portion of the chain corresponds to 65–72 (LENAGSVG). Residues 73-94 (LALIVWIVTGIITAVGALCYAE) traverse the membrane as a helical segment. Over 95–115 (LGVTIPKSGGDYSYVKDIFGG) the chain is Cytoplasmic. A helical transmembrane segment spans residues 116–148 (LAGFLRLWIAVLVIYPTNQAVIALTFSNYVLQP). An L-tryptophan-binding site is contributed by Asn133. At 149-156 (LFPTCFPP) the chain is on the extracellular side. Residues 157 to 177 (ESGLRLLAAICLLLLTWVNCS) traverse the membrane as a helical segment. Topologically, residues 178–180 (SVR) are cytoplasmic. The chain crosses the membrane as a helical span at residues 181-209 (WATRVQDIFTAGKLLALALIIIMGIVQIC). The Extracellular portion of the chain corresponds to 210 to 229 (KGEFFWLEPKNAFENFQEPD). Residues 230–251 (IGLVALAFLQGSFAYGGWNFLN) form a helical membrane-spanning segment. Gly245 is a binding site for L-leucine. Residues 252-264 (YVTEELVDPYKNL) lie on the Cytoplasmic side of the membrane. Residues 265–286 (PRAIFISIPLVTFVYVFANIAY) form a helical membrane-spanning segment. The Extracellular portion of the chain corresponds to 287-311 (VTAMSPQELLASNAVAVTFGEKLLG). Residues 312-337 (VMAWIMPISVALSTFGGVNGSLFTSS) traverse the membrane as a helical segment. Over 338–363 (RLFFAGAREGHLPSVLAMIHVKRCTP) the chain is Cytoplasmic. A helical transmembrane segment spans residues 364–381 (IPALLFTCLSTLLMLVTS). The Extracellular portion of the chain corresponds to 382–385 (DMYT). The helical transmembrane segment at 386–407 (LINYVGFINYLFYGVTVAGQIV) threads the bilayer. An L-tryptophan-binding site is contributed by Asn394. Residues 408–422 (LRWKKPDIPRPIKVS) are Cytoplasmic-facing. The next 2 membrane-spanning stretches (helical) occupy residues 423-445 (LLFP…WSEP) and 446-465 (VVCG…YFLG). Topologically, residues 466–531 (VYWQHKPKCF…VKDPDSEEQP (66 aa)) are cytoplasmic. A disordered region spans residues 499–531 (NSGAEETTDDLEEQHKPIFKPTPVKDPDSEEQP). A Phosphoserine modification is found at Ser527.

This sequence belongs to the amino acid-polyamine-organocation (APC) superfamily. L-type amino acid transporter (LAT) (TC 2.A.3.8) family. Disulfide-linked heterodimer composed of the catalytic light chain subunit SLC7A8 and the heavy chain subunit SLC3A2. SLC3A2 acts as a chaperone for correct plasma membrane trafficking and stabilization of SLC7A8 and modulates the substrate affinity and specificity of SLC7A8. ICAM-1 associates with the heterodimer SLC3A2/SLC7A8; facilitates leucine uptake. As to expression, strongly expressed in kidney and small intestine. Moderately present in placenta, ovary and brain. Expressed in the inner ear.

The protein resides in the cell membrane. Its subcellular location is the basolateral cell membrane. It carries out the reaction L-histidine(in) + L-phenylalanine(out) = L-histidine(out) + L-phenylalanine(in). It catalyses the reaction L-tryptophan(in) + L-phenylalanine(out) = L-tryptophan(out) + L-phenylalanine(in). The enzyme catalyses L-isoleucine(in) + L-phenylalanine(out) = L-isoleucine(out) + L-phenylalanine(in). The catalysed reaction is L-valine(in) + L-phenylalanine(out) = L-valine(out) + L-phenylalanine(in). It carries out the reaction L-leucine(in) + L-phenylalanine(out) = L-leucine(out) + L-phenylalanine(in). It catalyses the reaction L-glutamine(in) + L-phenylalanine(out) = L-glutamine(out) + L-phenylalanine(in). The enzyme catalyses L-cysteine(in) + L-phenylalanine(out) = L-cysteine(out) + L-phenylalanine(in). The catalysed reaction is L-phenylalanine(out) + L-methionine(in) = L-phenylalanine(in) + L-methionine(out). It carries out the reaction L-leucine(out) + L-methionine(in) = L-leucine(in) + L-methionine(out). It catalyses the reaction L-cysteine(out) + L-methionine(in) = L-cysteine(in) + L-methionine(out). The enzyme catalyses S-methylmercury-L-cysteine(out) + L-methionine(in) = S-methylmercury-L-cysteine(in) + L-methionine(out). The catalysed reaction is S-methylmercury-L-cysteine(in) + L-leucine(out) = S-methylmercury-L-cysteine(out) + L-leucine(in). It carries out the reaction S-methylmercury-L-cysteine(in) + L-phenylalanine(out) = S-methylmercury-L-cysteine(out) + L-phenylalanine(in). It catalyses the reaction L-phenylalanine(out) + L-serine(in) = L-phenylalanine(in) + L-serine(out). The enzyme catalyses L-phenylalanine(out) + glycine(in) = L-phenylalanine(in) + glycine(out). The catalysed reaction is L-phenylalanine(out) + L-alanine(in) = L-phenylalanine(in) + L-alanine(out). It carries out the reaction L-tryptophan(in) = L-tryptophan(out). It catalyses the reaction 3,3',5-triiodo-L-thyronine(out) = 3,3',5-triiodo-L-thyronine(in). The enzyme catalyses 3,3'-diiodo-L-thyronine(out) = 3,3'-diiodo-L-thyronine(in). The catalysed reaction is L-dopa(out) + L-phenylalanine(in) = L-dopa(in) + L-phenylalanine(out). Its function is as follows. Associates with SLC3A2 to form a functional heterodimeric complex that translocates small and large neutral amino acids with broad specificity and a stoichiometry of 1:1. Functions as amino acid antiporter mediating the influx of extracellular essential amino acids mainly in exchange with the efflux of highly concentrated intracellular amino acids. Has relatively symmetrical selectivities but strongly asymmetrical substrate affinities at both the intracellular and extracellular sides of the transporter. This asymmetry allows SLC7A8 to regulate intracellular amino acid pools (mM concentrations) by exchange with external amino acids (uM concentration range), equilibrating the relative concentrations of different amino acids across the plasma membrane instead of mediating their net uptake. May play an essential role in the reabsorption of neutral amino acids from the epithelial cells to the bloodstream in the kidney. Involved in the uptake of methylmercury (MeHg) when administered as the L-cysteine or D,L-homocysteine complexes, and hence plays a role in metal ion homeostasis and toxicity. Involved in the cellular activity of small molecular weight nitrosothiols, via the stereoselective transport of L-nitrosocysteine (L-CNSO) across the transmembrane. Imports the thyroid hormone diiodothyronine (T2) and to a smaller extent triiodothyronine (T3) but not rT 3 or thyroxine (T4). Mediates the uptake of L-DOPA. May participate in auditory function. The protein is Large neutral amino acids transporter small subunit 2 (Slc7a8) of Mus musculus (Mouse).